Reading from the N-terminus, the 255-residue chain is uncharacterized protein (255 aa).

Positions 13, 37, 55, 81, 148, 152, 180, and 182 each coordinate NADP(+). Tyr-148 functions as the Proton donor in the catalytic mechanism. Lys-152 acts as the Lowers pKa of active site Tyr in catalysis.

The protein belongs to the short-chain dehydrogenases/reductases (SDR) family.

Functionally, involved in osmoadaptation. This is an uncharacterized protein from Emericella nidulans (strain FGSC A4 / ATCC 38163 / CBS 112.46 / NRRL 194 / M139) (Aspergillus nidulans).